The following is a 258-amino-acid chain: 4-hydroxy-tetrahydrodipicolinate reductase (258 aa).

10-15 (GCLGRM) lines the NAD(+) pocket. NADP(+) is bound at residue K38. NAD(+) is bound by residues 89–91 (GTT) and 113–116 (AGNM). Catalysis depends on H146, which acts as the Proton donor/acceptor. (S)-2,3,4,5-tetrahydrodipicolinate is bound at residue H147. K150 (proton donor) is an active-site residue. 156 to 157 (GT) is a binding site for (S)-2,3,4,5-tetrahydrodipicolinate.

This sequence belongs to the DapB family.

It is found in the cytoplasm. The catalysed reaction is (S)-2,3,4,5-tetrahydrodipicolinate + NAD(+) + H2O = (2S,4S)-4-hydroxy-2,3,4,5-tetrahydrodipicolinate + NADH + H(+). It carries out the reaction (S)-2,3,4,5-tetrahydrodipicolinate + NADP(+) + H2O = (2S,4S)-4-hydroxy-2,3,4,5-tetrahydrodipicolinate + NADPH + H(+). Its pathway is amino-acid biosynthesis; L-lysine biosynthesis via DAP pathway; (S)-tetrahydrodipicolinate from L-aspartate: step 4/4. Functionally, catalyzes the conversion of 4-hydroxy-tetrahydrodipicolinate (HTPA) to tetrahydrodipicolinate. In Pelagibacter ubique (strain HTCC1062), this protein is 4-hydroxy-tetrahydrodipicolinate reductase.